Consider the following 140-residue polypeptide: Endoribonuclease YbeY (140 aa).

Zn(2+) contacts are provided by histidine 100, histidine 104, and histidine 110.

Belongs to the endoribonuclease YbeY family. Zn(2+) is required as a cofactor.

The protein resides in the cytoplasm. In terms of biological role, single strand-specific metallo-endoribonuclease involved in late-stage 70S ribosome quality control and in maturation of the 3' terminus of the 16S rRNA. The protein is Endoribonuclease YbeY of Helicobacter pylori (strain Shi470).